Here is a 320-residue protein sequence, read N- to C-terminus: NAD kinase (320 aa).

Asp-96 functions as the Proton acceptor in the catalytic mechanism. NAD(+) contacts are provided by residues 96–97, Arg-101, 170–171, Asp-200, and 211–216; these read DG, NE, and TAYAFS.

Belongs to the NAD kinase family. A divalent metal cation is required as a cofactor.

It localises to the cytoplasm. The catalysed reaction is NAD(+) + ATP = ADP + NADP(+) + H(+). Its function is as follows. Involved in the regulation of the intracellular balance of NAD and NADP, and is a key enzyme in the biosynthesis of NADP. Catalyzes specifically the phosphorylation on 2'-hydroxyl of the adenosine moiety of NAD to yield NADP. This chain is NAD kinase, found in Rhodococcus jostii (strain RHA1).